Consider the following 913-residue polypeptide: Transient receptor potential cation channel protein painless (913 aa).

The Cytoplasmic segment spans residues 1 to 490; sequence MDFNNCGFID…SSFLFLKWHR (490 aa). ANK repeat units lie at residues 154 to 189, 260 to 289, and 368 to 397; these read GEFTPLHHVLRKSKVKAGKKELIQLFLDHPELDIDS, EYFGLLQESIKRGRQRAFDVILSTGMDINS, and GRLVPLFFAVKYRNTSAMQKLLKNGAYIGS. Residues 491–511 traverse the membrane as a helical segment; sequence LSVIFYLNFLIYSLFTASIIT. Residues 512-523 lie on the Extracellular side of the membrane; sequence YTLLKFHESDQR. The chain crosses the membrane as a helical span at residues 524–544; the sequence is ALTAFFGLLSWLGISYLILRE. The Cytoplasmic portion of the chain corresponds to 545–555; it reads CIQWIMSPVRY. The helical transmembrane segment at 556–576 threads the bilayer; sequence FWSITNIMEVALITLSIFTCM. Topologically, residues 577 to 586 are extracellular; it reads ESSFDKETQR. A helical membrane pass occupies residues 587–607; sequence VLAVFTILLVSMEFCLLVGSL. Residues 608–628 are Cytoplasmic-facing; it reads PVLSISTHMLMLREVSNSFLK. A helical transmembrane segment spans residues 629–649; that stretch reads SFTLYSIFVLTFSLCFYILFG. Topologically, residues 650–708 are extracellular; sequence KSVEEDQSKSATPCPPLGKKEGKDEEQGFNTFTKPIEAVIKTIVMLTGEFDAGSIQFTS. The segment at 656-675 is disordered; sequence QSKSATPCPPLGKKEGKDEE. The helical transmembrane segment at 709 to 729 threads the bilayer; it reads IYTYLIFLLFVIFMTIVLFNL. Residues 730 to 913 are Cytoplasmic-facing; it reads LNGLAVSDTQ…QLIQLVQDRK (184 aa).

Belongs to the transient receptor (TC 1.A.4) family. As to expression, present in multidendritic neurons, chordotonal neurons, a subset of cells in the central nervous system and a subset of sensory neurons in the antennal-maxillary complex. Not detected in gonads and dorsal vessels (at protein level). Expressed in peripheral neurons that extend multiple branched dendrites beneath the larval epidermis, similar to vertebrate pain receptors.

It is found in the membrane. Functionally, receptor-activated non-selective cation channel involved in detection of pain sensation due to high temperature. Involved in heat nociception by being activated by noxious temperature of 38 degrees Celsius. In Drosophila melanogaster (Fruit fly), this protein is Transient receptor potential cation channel protein painless (pain).